The chain runs to 1372 residues: DNA-directed RNA polymerase subunit beta' (1372 aa).

The Zn(2+) site is built by cysteine 69, cysteine 71, cysteine 84, and cysteine 87. Mg(2+)-binding residues include aspartate 460, aspartate 462, and aspartate 464. 4 residues coordinate Zn(2+): cysteine 808, cysteine 882, cysteine 889, and cysteine 892.

Belongs to the RNA polymerase beta' chain family. In terms of assembly, the RNAP catalytic core consists of 2 alpha, 1 beta, 1 beta' and 1 omega subunit. When a sigma factor is associated with the core the holoenzyme is formed, which can initiate transcription. It depends on Mg(2+) as a cofactor. Requires Zn(2+) as cofactor.

It catalyses the reaction RNA(n) + a ribonucleoside 5'-triphosphate = RNA(n+1) + diphosphate. DNA-dependent RNA polymerase catalyzes the transcription of DNA into RNA using the four ribonucleoside triphosphates as substrates. This chain is DNA-directed RNA polymerase subunit beta', found in Rickettsia typhi (strain ATCC VR-144 / Wilmington).